A 163-amino-acid polypeptide reads, in one-letter code: NADH-quinone oxidoreductase subunit I (163 aa).

2 consecutive 4Fe-4S ferredoxin-type domains span residues 53–83 (LRRY…IEAG) and 94–123 (TLYE…ETRE). [4Fe-4S] cluster-binding residues include Cys63, Cys66, Cys69, Cys73, Cys103, Cys106, Cys109, and Cys113.

This sequence belongs to the complex I 23 kDa subunit family. In terms of assembly, NDH-1 is composed of 14 different subunits. Subunits NuoA, H, J, K, L, M, N constitute the membrane sector of the complex. [4Fe-4S] cluster is required as a cofactor.

It is found in the cell inner membrane. The catalysed reaction is a quinone + NADH + 5 H(+)(in) = a quinol + NAD(+) + 4 H(+)(out). NDH-1 shuttles electrons from NADH, via FMN and iron-sulfur (Fe-S) centers, to quinones in the respiratory chain. The immediate electron acceptor for the enzyme in this species is believed to be ubiquinone. Couples the redox reaction to proton translocation (for every two electrons transferred, four hydrogen ions are translocated across the cytoplasmic membrane), and thus conserves the redox energy in a proton gradient. The sequence is that of NADH-quinone oxidoreductase subunit I from Alkalilimnicola ehrlichii (strain ATCC BAA-1101 / DSM 17681 / MLHE-1).